The following is a 628-amino-acid chain: 1-deoxy-D-xylulose-5-phosphate synthase (628 aa).

Residues His80 and 121–123 each bind thiamine diphosphate; that span reads GHS. Asp152 is a binding site for Mg(2+). Thiamine diphosphate is bound by residues 153–154, Asn181, Tyr289, and Glu370; that span reads GG. Residue Asn181 participates in Mg(2+) binding.

The protein belongs to the transketolase family. DXPS subfamily. As to quaternary structure, homodimer. The cofactor is Mg(2+). Thiamine diphosphate serves as cofactor.

It carries out the reaction D-glyceraldehyde 3-phosphate + pyruvate + H(+) = 1-deoxy-D-xylulose 5-phosphate + CO2. Its pathway is metabolic intermediate biosynthesis; 1-deoxy-D-xylulose 5-phosphate biosynthesis; 1-deoxy-D-xylulose 5-phosphate from D-glyceraldehyde 3-phosphate and pyruvate: step 1/1. Catalyzes the acyloin condensation reaction between C atoms 2 and 3 of pyruvate and glyceraldehyde 3-phosphate to yield 1-deoxy-D-xylulose-5-phosphate (DXP). This is 1-deoxy-D-xylulose-5-phosphate synthase from Alkalilimnicola ehrlichii (strain ATCC BAA-1101 / DSM 17681 / MLHE-1).